The sequence spans 77 residues: Large ribosomal subunit protein uL24 (77 aa).

This sequence belongs to the universal ribosomal protein uL24 family. Part of the 50S ribosomal subunit.

Functionally, one of two assembly initiator proteins, it binds directly to the 5'-end of the 23S rRNA, where it nucleates assembly of the 50S subunit. Its function is as follows. One of the proteins that surrounds the polypeptide exit tunnel on the outside of the subunit. This is Large ribosomal subunit protein uL24 from Campylobacter jejuni subsp. jejuni serotype O:6 (strain 81116 / NCTC 11828).